Reading from the N-terminus, the 92-residue chain is 10 kDa late embryogenesis abundant protein (92 aa).

The segment covering 1-10 (MASQQGQQTR) has biased composition (polar residues). The disordered stretch occupies residues 1-92 (MASQQGQQTR…GEREEEEEED (92 aa)). Composition is skewed to basic and acidic residues over residues 11–26 (KIPEQEKKDLDQRAAK) and 38–71 (KSLEAQERLAEGRSKGGQTRKDQLGTEGYKEMGK).

Belongs to the small hydrophilic plant seed protein family. Maximally expressed in dry seeds. Also present in mid-maturation embryos.

LEA proteins are late embryonic proteins abundant in higher plant seed embryos. They may play an essential role in seed survival and in controlling water exchanges during seed desiccation and imbibition. This is 10 kDa late embryogenesis abundant protein from Helianthus annuus (Common sunflower).